A 416-amino-acid chain; its full sequence is Choline/ethanolaminephosphotransferase 1 (416 aa).

The disordered stretch occupies residues 1 to 20; the sequence is MSGHRSTRKRCGDSHPESPV. The residue at position 18 (serine 18) is a Phosphoserine. Residue threonine 40 is modified to Phosphothreonine. Position 86 (asparagine 86) interacts with CDP-choline. Transmembrane regions (helical) follow at residues 89 to 108 and 116 to 133; these read TIIGLSINICTTILLVFYCP and LWAYIACACGLFIYQSLD. Residue aspartate 133 participates in Mg(2+) binding. Residue asparagine 144 is glycosylated (N-linked (GlcNAc...) asparagine). A CDP-choline-binding site is contributed by glutamate 151. Aspartate 154 lines the Mg(2+) pocket. Histidine 155 serves as the catalytic Proton acceptor. The next 8 helical transmembrane spans lie at 156–176, 180–199, 210–230, 246–267, 286–306, 315–334, 349–363, and 368–388; these read GCDSLSTVFVVLGTCIAVQLG, DWMFFCCFAGTFMFYCAHWQ, IIDVTEVQIFIIIMHLLAVIG, MKIFPALCTVAGTIFSCTNYFR, VLSPFLHIGSVITLAAMIYKK, HPCLYILTFGFVSAKITNKL, TAFIGPALLFLDQYF, and DEYIVLWIALVFSFFDLIRYC. Aspartate 158 contributes to the Mg(2+) binding site.

It belongs to the CDP-alcohol phosphatidyltransferase class-I family. As to quaternary structure, homodimer. Requires Mg(2+) as cofactor. It depends on Mn(2+) as a cofactor. Ubiquitously expressed.

The protein localises to the endoplasmic reticulum membrane. It localises to the nucleus membrane. The catalysed reaction is CDP-ethanolamine + a 1,2-diacyl-sn-glycerol = a 1,2-diacyl-sn-glycero-3-phosphoethanolamine + CMP + H(+). It catalyses the reaction CDP-choline + a 1,2-diacyl-sn-glycerol = a 1,2-diacyl-sn-glycero-3-phosphocholine + CMP + H(+). The enzyme catalyses 1-O-alkyl-2-acyl-sn-glycerol + CDP-choline = a 1-O-alkyl-2-acyl-sn-glycero-3-phosphocholine + CMP + H(+). It carries out the reaction a 1-O-(1Z-alkenyl)-2-acyl-sn-glycerol + CDP-choline = a 1-O-(1Z-alkenyl)-2-acyl-sn-glycero-3-phosphocholine + CMP + H(+). The catalysed reaction is 1,2-dioctanoyl-sn-glycerol + CDP-choline = 1,2-dioctanoyl-sn-glycero-3-phosphocholine + CMP + H(+). It catalyses the reaction 1,2-didecanoyl-sn-glycerol + CDP-choline = 1,2-didecanoyl-sn-glycero-3-phosphocholine + CMP + H(+). The enzyme catalyses CDP-choline + 1,2-di-(9Z-octadecenoyl)-sn-glycerol = 1,2-di-(9Z-octadecenoyl)-sn-glycero-3-phosphocholine + CMP + H(+). It carries out the reaction 1-hexadecanoyl-2-(9Z-octadecenoyl)-sn-glycerol + CDP-choline = 1-hexadecanoyl-2-(9Z-octadecenoyl)-sn-glycero-3-phosphocholine + CMP + H(+). The catalysed reaction is CDP-ethanolamine + 1,2-di-(9Z-octadecenoyl)-sn-glycerol = 1,2-di-(9Z-octadecenoyl)-sn-glycero-3-phosphoethanolamine + CMP + H(+). It catalyses the reaction 1-hexadecanoyl-2-(9Z-octadecenoyl)-sn-glycerol + CDP-ethanolamine = 1-hexadecanoyl-2-(9Z-octadecenoyl)-sn-glycero-3-phosphoethanolamine + CMP + H(+). The enzyme catalyses 1-hexadecanoyl-2-(4Z,7Z,10Z,13Z,16Z,19Z-docosahexaenoyl)-sn-glycerol + CDP-choline = 1-hexadecanoyl-2-(4Z,7Z,10Z,13Z,16Z,19Z-docosahexaenoyl)-sn-glycero-3-phosphocholine + CMP + H(+). It carries out the reaction 1,2-di-(9Z-hexadecenoyl)-sn-glycerol + CDP-choline = 1,2-di-(9Z-hexadecenoyl)-sn-glycero-3-phosphocholine + CMP + H(+). The catalysed reaction is 1,2-di-(9Z-hexadecenoyl)-sn-glycerol + CDP-ethanolamine = 1,2-di-(9Z-hexadecenoyl)-sn-glycero-3-phosphoethanolamine + CMP + H(+). It catalyses the reaction 1-O-hexadecyl-2-acetyl-sn-glycerol + CDP-choline = 1-O-hexadecyl-2-acetyl-sn-glycero-3-phosphocholine + CMP + H(+). The enzyme catalyses 1-O-hexadecyl-2-(5Z,8Z,11Z,14Z-eicosatetraenoyl)-sn-glycerol + CDP-choline = 1-O-hexadecyl-2-(5Z,8Z,11Z,14Z)-eicosatetraenoyl-sn-glycero-3-phosphocholine + CMP + H(+). It participates in phospholipid metabolism; phosphatidylethanolamine biosynthesis; phosphatidylethanolamine from ethanolamine: step 3/3. It functions in the pathway phospholipid metabolism; phosphatidylcholine biosynthesis; phosphatidylcholine from phosphocholine: step 2/2. Catalyzes both phosphatidylcholine and phosphatidylethanolamine biosynthesis from CDP-choline and CDP-ethanolamine, respectively. Involved in protein-dependent process of phospholipid transport to distribute phosphatidyl choline to the lumenal surface. Has a higher cholinephosphotransferase activity than ethanolaminephosphotransferase activity. The polypeptide is Choline/ethanolaminephosphotransferase 1 (Homo sapiens (Human)).